We begin with the raw amino-acid sequence, 85 residues long: ATP synthase subunit c (85 aa).

A run of 2 helical transmembrane segments spans residues 20-40 and 65-85; these read LGAGIAVFALAGVGMGLGNIF and FALTEAVALFALLIAFLILFA.

Belongs to the ATPase C chain family. As to quaternary structure, F-type ATPases have 2 components, F(1) - the catalytic core - and F(0) - the membrane proton channel. F(1) has five subunits: alpha(3), beta(3), gamma(1), delta(1), epsilon(1). F(0) has three main subunits: a(1), b(2) and c(10-14). The alpha and beta chains form an alternating ring which encloses part of the gamma chain. F(1) is attached to F(0) by a central stalk formed by the gamma and epsilon chains, while a peripheral stalk is formed by the delta and b chains.

It is found in the cell inner membrane. In terms of biological role, f(1)F(0) ATP synthase produces ATP from ADP in the presence of a proton or sodium gradient. F-type ATPases consist of two structural domains, F(1) containing the extramembraneous catalytic core and F(0) containing the membrane proton channel, linked together by a central stalk and a peripheral stalk. During catalysis, ATP synthesis in the catalytic domain of F(1) is coupled via a rotary mechanism of the central stalk subunits to proton translocation. Key component of the F(0) channel; it plays a direct role in translocation across the membrane. A homomeric c-ring of between 10-14 subunits forms the central stalk rotor element with the F(1) delta and epsilon subunits. This chain is ATP synthase subunit c, found in Gluconobacter oxydans (strain 621H) (Gluconobacter suboxydans).